Consider the following 392-residue polypeptide: NADH-quinone oxidoreductase subunit D (392 aa).

This sequence belongs to the complex I 49 kDa subunit family. In terms of assembly, NDH-1 is composed of 14 different subunits. Subunits NuoB, C, D, E, F, and G constitute the peripheral sector of the complex.

The protein resides in the cell inner membrane. The catalysed reaction is a quinone + NADH + 5 H(+)(in) = a quinol + NAD(+) + 4 H(+)(out). Functionally, NDH-1 shuttles electrons from NADH, via FMN and iron-sulfur (Fe-S) centers, to quinones in the respiratory chain. The immediate electron acceptor for the enzyme in this species is believed to be ubiquinone. Couples the redox reaction to proton translocation (for every two electrons transferred, four hydrogen ions are translocated across the cytoplasmic membrane), and thus conserves the redox energy in a proton gradient. This chain is NADH-quinone oxidoreductase subunit D, found in Paramagnetospirillum magneticum (strain ATCC 700264 / AMB-1) (Magnetospirillum magneticum).